The following is a 121-amino-acid chain: Trypsin/alpha-amylase inhibitor CMX2 (121 aa).

The N-terminal stretch at 1-24 is a signal peptide; it reads MAFKHQLILSTAILLAVLAAASAS.

It belongs to the protease inhibitor I6 (cereal trypsin/alpha-amylase inhibitor) family.

It localises to the secreted. This is Trypsin/alpha-amylase inhibitor CMX2 from Triticum aestivum (Wheat).